Here is a 383-residue protein sequence, read N- to C-terminus: NifS-like protein (383 aa).

Residues 58 to 59 and 184 to 186 each bind pyridoxal 5'-phosphate; these read SE and SIN.

It belongs to the class-V pyridoxal-phosphate-dependent aminotransferase family. NifS/IscS subfamily. Pyridoxal 5'-phosphate serves as cofactor.

It localises to the virion. The sequence is that of NifS-like protein from African swine fever virus (strain Badajoz 1971 Vero-adapted) (Ba71V).